Consider the following 88-residue polypeptide: Small ribosomal subunit protein bS18 (88 aa).

Residues methionine 1–asparagine 11 show a composition bias toward low complexity. The disordered stretch occupies residues methionine 1–alanine 21.

It belongs to the bacterial ribosomal protein bS18 family. Part of the 30S ribosomal subunit. Forms a tight heterodimer with protein bS6.

Its function is as follows. Binds as a heterodimer with protein bS6 to the central domain of the 16S rRNA, where it helps stabilize the platform of the 30S subunit. In Thermoanaerobacter pseudethanolicus (strain ATCC 33223 / 39E) (Clostridium thermohydrosulfuricum), this protein is Small ribosomal subunit protein bS18.